Here is a 67-residue protein sequence, read N- to C-terminus: Photosystem II reaction center protein H (67 aa).

Residues 27–47 (GAVPVMAFVGVLLLVFLVILL) traverse the membrane as a helical segment.

Belongs to the PsbH family. In terms of assembly, PSII is composed of 1 copy each of membrane proteins PsbA, PsbB, PsbC, PsbD, PsbE, PsbF, PsbH, PsbI, PsbJ, PsbK, PsbL, PsbM, PsbT, PsbX, PsbY, Psb30/Ycf12, peripheral proteins PsbO, CyanoQ (PsbQ), PsbU, PsbV and a large number of cofactors. It forms dimeric complexes.

Its subcellular location is the cellular thylakoid membrane. One of the components of the core complex of photosystem II (PSII), required for its stability and/or assembly. PSII is a light-driven water:plastoquinone oxidoreductase that uses light energy to abstract electrons from H(2)O, generating O(2) and a proton gradient subsequently used for ATP formation. It consists of a core antenna complex that captures photons, and an electron transfer chain that converts photonic excitation into a charge separation. This chain is Photosystem II reaction center protein H, found in Prochlorococcus marinus (strain SARG / CCMP1375 / SS120).